Consider the following 403-residue polypeptide: DNA polymerase IV (403 aa).

The region spanning 23-203 is the UmuC domain; that stretch reads IAHMDCDAFY…KPVNILPGVG (181 aa). Asp-27 and Asp-120 together coordinate Mg(2+). The active site involves Glu-121.

The protein belongs to the DNA polymerase type-Y family. Monomer. Mg(2+) serves as cofactor.

It localises to the cytoplasm. The enzyme catalyses DNA(n) + a 2'-deoxyribonucleoside 5'-triphosphate = DNA(n+1) + diphosphate. Its function is as follows. Poorly processive, error-prone DNA polymerase involved in untargeted mutagenesis. Copies undamaged DNA at stalled replication forks, which arise in vivo from mismatched or misaligned primer ends. These misaligned primers can be extended by PolIV. Exhibits no 3'-5' exonuclease (proofreading) activity. May be involved in translesional synthesis, in conjunction with the beta clamp from PolIII. This Caulobacter vibrioides (strain ATCC 19089 / CIP 103742 / CB 15) (Caulobacter crescentus) protein is DNA polymerase IV.